A 124-amino-acid chain; its full sequence is UPF0102 protein Noca_3248 (124 aa).

The protein belongs to the UPF0102 family.

The protein is UPF0102 protein Noca_3248 of Nocardioides sp. (strain ATCC BAA-499 / JS614).